The following is a 91-amino-acid chain: Cell division topological specificity factor (91 aa).

It belongs to the MinE family.

Functionally, prevents the cell division inhibition by proteins MinC and MinD at internal division sites while permitting inhibition at polar sites. This ensures cell division at the proper site by restricting the formation of a division septum at the midpoint of the long axis of the cell. The polypeptide is Cell division topological specificity factor (Bradyrhizobium diazoefficiens (strain JCM 10833 / BCRC 13528 / IAM 13628 / NBRC 14792 / USDA 110)).